Here is a 389-residue protein sequence, read N- to C-terminus: Xylose isomerase (389 aa).

Active-site residues include His-101 and Asp-104. Positions 232, 268, 271, 296, 307, and 309 each coordinate Mg(2+).

Belongs to the xylose isomerase family. As to quaternary structure, homotetramer. Requires Mg(2+) as cofactor.

Its subcellular location is the cytoplasm. The enzyme catalyses alpha-D-xylose = alpha-D-xylulofuranose. In Lactococcus lactis subsp. cremoris (strain SK11), this protein is Xylose isomerase.